Here is a 377-residue protein sequence, read N- to C-terminus: Actin depolymerising venom protein gelsolin 1 (377 aa).

Residues 1–26 (MFRQMKLGSLATKLLLACFLVTCTSG) form the signal peptide. Gelsolin-like repeat units lie at residues 50–133 (FVPV…SEQF), 174–243 (IRVR…SSTS), and 298–368 (EKPL…PTAF).

As to expression, expressed by the venom gland (posterior main gland) (at protein level).

Its subcellular location is the secreted. This is Actin depolymerising venom protein gelsolin 1 from Platymeris rhadamanthus (Red spot assassin bug).